Here is a 189-residue protein sequence, read N- to C-terminus: Adenylate kinase (189 aa).

Position 10–15 (10–15) interacts with ATP; the sequence is AAGKGT. Residues 30 to 59 are NMP; it reads STGDMLRAAIASGSELGQKVKGVLDRGELV. AMP-binding positions include threonine 31, arginine 36, 57–59, 85–88, and glutamine 92; these read ELV and GFPR. The LID stretch occupies residues 126-136; that stretch reads KRFAEQGRPDD. Arginine 127 is a binding site for ATP. Positions 133 and 144 each coordinate AMP. Alanine 172 serves as a coordination point for ATP.

The protein belongs to the adenylate kinase family. Monomer.

Its subcellular location is the cytoplasm. It catalyses the reaction AMP + ATP = 2 ADP. Its pathway is purine metabolism; AMP biosynthesis via salvage pathway; AMP from ADP: step 1/1. Functionally, catalyzes the reversible transfer of the terminal phosphate group between ATP and AMP. Plays an important role in cellular energy homeostasis and in adenine nucleotide metabolism. The sequence is that of Adenylate kinase from Caulobacter sp. (strain K31).